Reading from the N-terminus, the 792-residue chain is X-ray radiation resistance-associated protein 1 (792 aa).

LRR repeat units follow at residues 104-125 (DLCT…IYIN), 141-155 (ALKE…IKTI), 164-184 (LLEF…CDLG), 188-209 (HLRV…LAVA), 229-250 (ALET…ASLA), and 254-275 (RLKK…QQVQ). Disordered regions lie at residues 490–517 (AEDL…SPSC), 537–562 (TLSH…KSTE), and 577–601 (IHKD…EVKG). The segment covering 549–560 (SPERPSDEDSKS) has biased composition (basic and acidic residues). Residues 723-745 (HKQYLEAKRLLKEFQARYRQLVS) adopt a coiled-coil conformation.

Expressed predominantly in testis followed by prostate and ovary. Low levels found in other tissues including peripheral blood leukocytes, spleen, thymus, small intestine and colon. Also expressed in neuroblastoma, glioma, breast, lung, leukemia, renal, ovarian, prostate and colorectal cancer cell lines.

Its subcellular location is the cytoplasm. The protein localises to the nucleus. In terms of biological role, may be involved in the response of cells to X-ray radiation. The chain is X-ray radiation resistance-associated protein 1 from Homo sapiens (Human).